The following is a 130-amino-acid chain: Glycine cleavage system H protein (130 aa).

Residues 24-106 form the Lipoyl-binding domain; it reads TLTIGITDHA…YGEGWIMRIR (83 aa). The residue at position 65 (Lys-65) is an N6-lipoyllysine. The disordered stretch occupies residues 111 to 130; the sequence is DDLEQLLDPEDYQDLVADEE.

The protein belongs to the GcvH family. As to quaternary structure, the glycine cleavage system is composed of four proteins: P, T, L and H. It depends on (R)-lipoate as a cofactor.

Its function is as follows. The glycine cleavage system catalyzes the degradation of glycine. The H protein shuttles the methylamine group of glycine from the P protein to the T protein. This Alkalilimnicola ehrlichii (strain ATCC BAA-1101 / DSM 17681 / MLHE-1) protein is Glycine cleavage system H protein.